The following is a 228-amino-acid chain: 2,3-bisphosphoglycerate-dependent phosphoglycerate mutase (228 aa).

Substrate-binding positions include 8–15, 21–22, R60, 87–90, K98, 114–115, and 183–184; these read RHGQSEWN, TG, ERHY, RR, and GN. Residue H9 is the Tele-phosphohistidine intermediate of the active site. E87 acts as the Proton donor/acceptor in catalysis.

The protein belongs to the phosphoglycerate mutase family. BPG-dependent PGAM subfamily.

It catalyses the reaction (2R)-2-phosphoglycerate = (2R)-3-phosphoglycerate. Its pathway is carbohydrate degradation; glycolysis; pyruvate from D-glyceraldehyde 3-phosphate: step 3/5. Catalyzes the interconversion of 2-phosphoglycerate and 3-phosphoglycerate. In Staphylococcus haemolyticus (strain JCSC1435), this protein is 2,3-bisphosphoglycerate-dependent phosphoglycerate mutase.